Here is a 273-residue protein sequence, read N- to C-terminus: Putative pyruvate, phosphate dikinase regulatory protein (273 aa).

153 to 160 (GVSRTSKS) is an ADP binding site.

This sequence belongs to the pyruvate, phosphate/water dikinase regulatory protein family. PDRP subfamily.

It catalyses the reaction N(tele)-phospho-L-histidyl/L-threonyl-[pyruvate, phosphate dikinase] + ADP = N(tele)-phospho-L-histidyl/O-phospho-L-threonyl-[pyruvate, phosphate dikinase] + AMP + H(+). The enzyme catalyses N(tele)-phospho-L-histidyl/O-phospho-L-threonyl-[pyruvate, phosphate dikinase] + phosphate + H(+) = N(tele)-phospho-L-histidyl/L-threonyl-[pyruvate, phosphate dikinase] + diphosphate. Functionally, bifunctional serine/threonine kinase and phosphorylase involved in the regulation of the pyruvate, phosphate dikinase (PPDK) by catalyzing its phosphorylation/dephosphorylation. This Ehrlichia ruminantium (strain Gardel) protein is Putative pyruvate, phosphate dikinase regulatory protein.